Here is a 59-residue protein sequence, read N- to C-terminus: Putative HTH-type transcriptional regulator YneL (59 aa).

Positions 1 to 59 (MSPLRYQKWLRLNEVRRQMLNEHYDVTTAAYAVGYESYPISVGNIRGCLESHPREILPG) constitute an HTH araC/xylS-type domain. Positions 26–49 (VTTAAYAVGYESYPISVGNIRGCL) form a DNA-binding region, H-T-H motif.

The chain is Putative HTH-type transcriptional regulator YneL (yneL) from Escherichia coli (strain K12).